The sequence spans 154 residues: Fimbrial protein (154 aa).

Residues methionine 1–glycine 6 constitute a propeptide, leader sequence. Residue phenylalanine 7 is modified to N-methylphenylalanine. Residues phenylalanine 7–isoleucine 27 traverse the membrane as a helical segment. Cysteine 133 and cysteine 151 are disulfide-bonded. O-linked (FucNAc...) serine glycosylation is present at serine 154.

It belongs to the N-Me-Phe pilin family. The pili are polar flexible filaments of about 5.4 nanometers diameter and 2.5 micrometers average length; they consist of only a single polypeptide chain arranged in a helical configuration of five subunits per turn in the assembled pilus. O-glycosylated; glycan consists of 5NbetaOHC47NFmPse(alpha2-4)Xyl(beta1-3)FucNAc in beta1-O linkage to Ser.

Its subcellular location is the fimbrium. The protein resides in the membrane. The chain is Fimbrial protein (pilA) from Pseudomonas aeruginosa.